The following is a 634-amino-acid chain: Threonine--tRNA ligase (634 aa).

Positions 1–61 constitute a TGS domain; sequence MINIRFPDGS…NSNCELRLIT (61 aa). Positions 241-532 are catalytic; the sequence is DHRKIGKVLD…LIEHYAGNLP (292 aa). 3 residues coordinate Zn(2+): Cys332, His383, and His509.

The protein belongs to the class-II aminoacyl-tRNA synthetase family. Homodimer. It depends on Zn(2+) as a cofactor.

The protein resides in the cytoplasm. It carries out the reaction tRNA(Thr) + L-threonine + ATP = L-threonyl-tRNA(Thr) + AMP + diphosphate + H(+). Functionally, catalyzes the attachment of threonine to tRNA(Thr) in a two-step reaction: L-threonine is first activated by ATP to form Thr-AMP and then transferred to the acceptor end of tRNA(Thr). Also edits incorrectly charged L-seryl-tRNA(Thr). In Francisella tularensis subsp. novicida (strain U112), this protein is Threonine--tRNA ligase.